We begin with the raw amino-acid sequence, 192 residues long: Fe/S biogenesis protein NfuA (192 aa).

[4Fe-4S] cluster-binding residues include cysteine 149 and cysteine 152.

It belongs to the NfuA family. As to quaternary structure, homodimer. The cofactor is [4Fe-4S] cluster.

Its function is as follows. Involved in iron-sulfur cluster biogenesis. Binds a 4Fe-4S cluster, can transfer this cluster to apoproteins, and thereby intervenes in the maturation of Fe/S proteins. Could also act as a scaffold/chaperone for damaged Fe/S proteins. The polypeptide is Fe/S biogenesis protein NfuA (Shewanella oneidensis (strain ATCC 700550 / JCM 31522 / CIP 106686 / LMG 19005 / NCIMB 14063 / MR-1)).